Here is a 128-residue protein sequence, read N- to C-terminus: Ribosome-binding factor A (128 aa).

This sequence belongs to the RbfA family. In terms of assembly, monomer. Binds 30S ribosomal subunits, but not 50S ribosomal subunits or 70S ribosomes.

The protein resides in the cytoplasm. Its function is as follows. One of several proteins that assist in the late maturation steps of the functional core of the 30S ribosomal subunit. Associates with free 30S ribosomal subunits (but not with 30S subunits that are part of 70S ribosomes or polysomes). Required for efficient processing of 16S rRNA. May interact with the 5'-terminal helix region of 16S rRNA. This is Ribosome-binding factor A from Pseudomonas paraeruginosa (strain DSM 24068 / PA7) (Pseudomonas aeruginosa (strain PA7)).